A 466-amino-acid polypeptide reads, in one-letter code: MPFNHNSKAKRPKFLLDLQIKELVNIPQSSGYCYTKWRLKDGTGTSGHKVALDGEHQTTSTQSRGTTKHVHVQHHRAQWNYSLDKPILVKLHLDKNGRFLKKILVLDVFFEFADANSSLTSSSSPNGKVKKTTYANATALTATGNNSYSQKITGKLLLGTVDIDITEYVKEDETPTTNRFLLKHSKVNSIINVSLQLKLVRGSYEDFNISKSFTNGQLANYRPGINTILDNTSELSSPTSTTNQMSPKNTFSNFNGIGTTVAKPGTNATGNSTSIKSPTSTNHKSSEMTTKPGLSTTISSSMSPLIESLYQKTFKLPWDPRPGEFTPRECVEDILQGGNGWAKNEKGINLIDLQALRLNEMEEEYYNPNYGNNLGNKASSWPPNPSDDGYSTMGKREYLEKKQNWSHMSRAQRAKLRTHNDEDNENTANDKGSDKDNNSVEDNNPTDFLTDRIRENKNWSIITPSG.

The region spanning 4–199 (NHNSKAKRPK…IINVSLQLKL (196 aa)) is the C2 NT-type domain. Disordered stretches follow at residues 262–298 (AKPG…STTI), 374–393 (LGNK…YSTM), and 400–452 (EKKQ…LTDR). A compositionally biased stretch (polar residues) spans 266 to 298 (TNATGNSTSIKSPTSTNHKSSEMTTKPGLSTTI). S433 and S439 each carry phosphoserine.

It to S.pombe SpCC1494.08c.

This is an uncharacterized protein from Saccharomyces cerevisiae (strain ATCC 204508 / S288c) (Baker's yeast).